A 199-amino-acid chain; its full sequence is NADH-quinone oxidoreductase subunit C (199 aa).

It belongs to the complex I 30 kDa subunit family. NDH-1 is composed of 14 different subunits. Subunits NuoB, C, D, E, F, and G constitute the peripheral sector of the complex.

The protein localises to the cell inner membrane. The catalysed reaction is a quinone + NADH + 5 H(+)(in) = a quinol + NAD(+) + 4 H(+)(out). NDH-1 shuttles electrons from NADH, via FMN and iron-sulfur (Fe-S) centers, to quinones in the respiratory chain. The immediate electron acceptor for the enzyme in this species is believed to be ubiquinone. Couples the redox reaction to proton translocation (for every two electrons transferred, four hydrogen ions are translocated across the cytoplasmic membrane), and thus conserves the redox energy in a proton gradient. This chain is NADH-quinone oxidoreductase subunit C, found in Roseobacter denitrificans (strain ATCC 33942 / OCh 114) (Erythrobacter sp. (strain OCh 114)).